The following is a 412-amino-acid chain: Alanyl-tRNA editing protein Aarsd1-A (412 aa).

4 residues coordinate Zn(2+): His-108, His-112, Cys-208, and His-212.

It belongs to the class-II aminoacyl-tRNA synthetase family. Alax-L subfamily. Zn(2+) is required as a cofactor.

It is found in the cytoplasm. Functionally, functions in trans to edit the amino acid moiety from incorrectly charged tRNA(Ala). The protein is Alanyl-tRNA editing protein Aarsd1-A (aarsd1-a) of Xenopus laevis (African clawed frog).